Reading from the N-terminus, the 309-residue chain is Sulfate adenylyltransferase subunit 2 (309 aa).

It belongs to the PAPS reductase family. CysD subfamily. In terms of assembly, heterodimer composed of CysD, the smaller subunit, and CysN.

It carries out the reaction sulfate + ATP + H(+) = adenosine 5'-phosphosulfate + diphosphate. It participates in sulfur metabolism; hydrogen sulfide biosynthesis; sulfite from sulfate: step 1/3. With CysN forms the ATP sulfurylase (ATPS) that catalyzes the adenylation of sulfate producing adenosine 5'-phosphosulfate (APS) and diphosphate, the first enzymatic step in sulfur assimilation pathway. APS synthesis involves the formation of a high-energy phosphoric-sulfuric acid anhydride bond driven by GTP hydrolysis by CysN coupled to ATP hydrolysis by CysD. This chain is Sulfate adenylyltransferase subunit 2, found in Mycolicibacterium vanbaalenii (strain DSM 7251 / JCM 13017 / BCRC 16820 / KCTC 9966 / NRRL B-24157 / PYR-1) (Mycobacterium vanbaalenii).